We begin with the raw amino-acid sequence, 109 residues long: uncharacterized protein (109 aa).

This is an uncharacterized protein from Enterobacteria phage T4 (Bacteriophage T4).